The sequence spans 405 residues: ATP phosphoribosyltransferase regulatory subunit (405 aa).

This sequence belongs to the class-II aminoacyl-tRNA synthetase family. HisZ subfamily. As to quaternary structure, heteromultimer composed of HisG and HisZ subunits.

It is found in the cytoplasm. It functions in the pathway amino-acid biosynthesis; L-histidine biosynthesis; L-histidine from 5-phospho-alpha-D-ribose 1-diphosphate: step 1/9. In terms of biological role, required for the first step of histidine biosynthesis. May allow the feedback regulation of ATP phosphoribosyltransferase activity by histidine. The chain is ATP phosphoribosyltransferase regulatory subunit from Oceanobacillus iheyensis (strain DSM 14371 / CIP 107618 / JCM 11309 / KCTC 3954 / HTE831).